A 233-amino-acid chain; its full sequence is Large ribosomal subunit protein uL3 (233 aa).

Belongs to the universal ribosomal protein uL3 family. In terms of assembly, part of the 50S ribosomal subunit. Forms a cluster with proteins L14 and L19.

Its function is as follows. One of the primary rRNA binding proteins, it binds directly near the 3'-end of the 23S rRNA, where it nucleates assembly of the 50S subunit. The polypeptide is Large ribosomal subunit protein uL3 (Ureaplasma urealyticum serovar 10 (strain ATCC 33699 / Western)).